The chain runs to 160 residues: Protein max (160 aa).

The segment covering 1–13 (MSDNDDIEVESDE) has biased composition (acidic residues). Residues 1-40 (MSDNDDIEVESDEEQPRFQSAADKRAHHNALERKRRDHIK) form a disordered region. Ser2 is subject to N-acetylserine. Ser2 and Ser11 each carry phosphoserine. The bHLH domain occupies 23-74 (DKRAHHNALERKRRDHIKDSFHSLRDSVPSLQGEKASRAQILDKATEYIQYM). The segment covering 29-40 (NALERKRRDHIK) has biased composition (basic and acidic residues). N6-acetyllysine is present on Lys66. The leucine-zipper stretch occupies residues 81-102 (HQQDIDDLKRQNALLEQQVRAL). Residues 105–160 (ARSSAQLQTNYPSSDNSLYTNAKGGTISAFDGGSDSSSESEPEEPQNRKKLRMEAS) form a disordered region. Residue Ser107 is modified to Phosphoserine. Over residues 107–124 (SSAQLQTNYPSSDNSLYT) the composition is skewed to polar residues. Residues Lys153 and Lys154 each carry the N6-acetyllysine modification.

The protein belongs to the MAX family. As to quaternary structure, efficient DNA binding requires dimerization with another bHLH protein. Binds DNA as a heterodimer with MYC or MAD. Part of the E2F6.com-1 complex in G0 phase composed of E2F6, MGA, MAX, TFDP1, CBX3, BAT8, EUHMTASE1, RING1, RNF2, MBLR, L3MBTL2 and YAF2. Component of some MLL1/MLL complex, at least composed of the core components KMT2A/MLL1, ASH2L, HCFC1/HCF1, WDR5 and RBBP5, as well as the facultative components BACC1, CHD8, E2F6, HSP70, INO80C, KANSL1, LAS1L, MAX, MCRS1, MGA, MYST1/MOF, PELP1, PHF20, PRP31, RING2, RUVB1/TIP49A, RUVB2/TIP49B, SENP3, TAF1, TAF4, TAF6, TAF7, TAF9 and TEX10. Interacts with SPAG9. The heterodimer MYC:MAX interacts with ABI1; the interaction may enhance MYC:MAX transcriptional activity. In terms of processing, phosphorylated.

It is found in the nucleus. The protein localises to the cell projection. The protein resides in the dendrite. In terms of biological role, transcription regulator. Forms a sequence-specific DNA-binding protein complex with MYC or MAD which recognizes the core sequence 5'-CAC[GA]TG-3'. The MYC:MAX complex is a transcriptional activator, whereas the MAD:MAX complex is a repressor. May repress transcription via the recruitment of a chromatin remodeling complex containing H3 'Lys-9' histone methyltransferase activity. Represses MYC transcriptional activity from E-box elements. This Rattus norvegicus (Rat) protein is Protein max.